The sequence spans 468 residues: MNPLQPIQHSITNSQMSGGQQLEAEGSQAHNSYSHPDRISLSQLSQSAHLALDHLSTQPNTDHQRVASLVRNAVQDGKFQLQSSNDTQVTYKTSVCPPANADTMGAAHLINNELTVQARLNDQLEYDIVSAHLYGPSEAISIDASSPPSANDLASSGLSERTHLGMNRVLLRYAVPPRETEDQCVMVIDKMPPPKHGKMSFFRTTNDLSKLPLGMETGGLSDLKLAGCERISSVEQVKSIRAALGGGPLTVLDLREESHAIVNGLPITLRGPMDWANAGLSQVDGAARESAMITELKRTKSLTLVDANYVKGKKSNPQTTELKNLNVRSEREVVTEAGATYRRVAITDHNRPSPEATDELVDIMRHCLQANESLVVHCNGGRGRTTTAMIMVDMLKNARNHSAETLITRMAKLSYDYNMTDLGSISALKRPFLEDRLKFLQAFHDYARNNPSGLSLNWTQWRAKIALE.

Over residues 1–20 the composition is skewed to polar residues; sequence MNPLQPIQHSITNSQMSGGQ. The segment at 1–35 is disordered; it reads MNPLQPIQHSITNSQMSGGQQLEAEGSQAHNSYSH. The Tyrosine-protein phosphatase domain occupies 143 to 468; it reads DASSPPSAND…TQWRAKIALE (326 aa). The active-site Phosphocysteine intermediate is cysteine 378.

Interacts with EFR and FLS2 (via the kinase and cytoplasmic domains).

The protein resides in the secreted. The enzyme catalyses O-phospho-L-tyrosyl-[protein] + H2O = L-tyrosyl-[protein] + phosphate. With respect to regulation, inhibited by sodium orthovanadate. In terms of biological role, effector showing tyrosine-phosphatase activity required for host defense suppression. Functions inside plant cells causing suppression of HR (hypersensitive response), PR1 gene expression and oxidative burst probably by interfering with a MAPK (mitogen-activated protein kinase) pathway. MAPK cascades are known to activate defense-related transcription factors. Inhibits plant pattern-recognition receptors (PRRs) activation. The polypeptide is Effector protein hopD2 (hopD2) (Pseudomonas syringae pv. tomato (strain ATCC BAA-871 / DC3000)).